Reading from the N-terminus, the 633-residue chain is 1-deoxy-D-xylulose-5-phosphate synthase (633 aa).

Thiamine diphosphate is bound by residues His-72 and 113-115 (GHS). Asp-144 is a Mg(2+) binding site. Thiamine diphosphate-binding positions include 145–146 (GA), Asn-173, Tyr-284, and Glu-367. Asn-173 serves as a coordination point for Mg(2+).

Belongs to the transketolase family. DXPS subfamily. In terms of assembly, homodimer. The cofactor is Mg(2+). Thiamine diphosphate is required as a cofactor.

It carries out the reaction D-glyceraldehyde 3-phosphate + pyruvate + H(+) = 1-deoxy-D-xylulose 5-phosphate + CO2. It participates in metabolic intermediate biosynthesis; 1-deoxy-D-xylulose 5-phosphate biosynthesis; 1-deoxy-D-xylulose 5-phosphate from D-glyceraldehyde 3-phosphate and pyruvate: step 1/1. Its function is as follows. Catalyzes the acyloin condensation reaction between C atoms 2 and 3 of pyruvate and glyceraldehyde 3-phosphate to yield 1-deoxy-D-xylulose-5-phosphate (DXP). This is 1-deoxy-D-xylulose-5-phosphate synthase from Bacillus velezensis (strain DSM 23117 / BGSC 10A6 / LMG 26770 / FZB42) (Bacillus amyloliquefaciens subsp. plantarum).